The following is a 966-amino-acid chain: Muscular LMNA-interacting protein (966 aa).

S129 is modified (phosphoserine). Disordered regions lie at residues 132-154 (EDEATCRQGEQGPPGATGNIATR), 182-207 (SHPEIPHGIAPQQKHGQLTSPTTSEQ), 303-337 (LAPEAQKKVSTSSALNPREDVRTSPSPASGASLRS), 354-388 (PSPKPLTSSSHGSLSTVCSQTSSSGNLSKSGLKSP), 434-562 (IKQT…TRPS), 597-684 (KRTC…TPSL), 785-837 (SMHS…SQLT), and 929-966 (SLRDEQEKSPTLLSQDTYNKPGHPMVTIPEHDTLDSKE). A required for interaction with ISL1 region spans residues 144 to 810 (PPGATGNIAT…GSETIKTPTT (667 aa)). Polar residues-rich tracts occupy residues 195-207 (KHGQLTSPTTSEQ) and 325-337 (TSPSPASGASLRS). Composition is skewed to low complexity over residues 354–387 (PSPKPLTSSSHGSLSTVCSQTSSSGNLSKSGLKS), 437–455 (TPSTPKKSLSSCSLTTGST), and 478–497 (PLSQAQPPSPPALASSSYAA). A Phosphoserine modification is found at S486. Positions 507–521 (TLRSSTTPPQSQTDL) are enriched in polar residues. 2 stretches are compositionally biased toward basic and acidic residues: residues 542–555 (GRKDGDLRAPEKNR) and 597–607 (KRTCSQRHSDQ). Polar residues-rich tracts occupy residues 639–649 (SSLTQALQRSP) and 657–684 (GSATCPSRTGMPDSTASNRSSRVSTPSL). The segment covering 785–797 (SMHSSDSPSRPSQ) has biased composition (low complexity). Residue S791 is modified to Phosphoserine. Residues 798–810 (TMLGSETIKTPTT) show a composition bias toward polar residues. Residues 825–834 (SSSSSTTSES) show a composition bias toward low complexity. A compositionally biased stretch (polar residues) spans 937–946 (SPTLLSQDTY). Positions 957–966 (PEHDTLDSKE) are enriched in basic and acidic residues.

Directly interacts with LMNA. Interacts with ISL1 (via N-terminal domain); the interaction represses ISL1 transactivator activity. Interactions of ISL1 with MLIP1 and GCN5/KAT2A may be mutually exclusive. Expressed in cardiomyoctes. Expression is highly reduced in hypertrophic cardiomyocytes.

The protein resides in the nucleus. It is found in the nucleus envelope. The protein localises to the PML body. Its subcellular location is the cytoplasm. It localises to the cytosol. The protein resides in the cell membrane. It is found in the sarcolemma. Required for myoblast differentiation into myotubes, possibly acting as a transcriptional regulator of the myogenic program. Required for cardiac adaptation to stress through integrated regulation of the AKT/mTOR pathways and FOXO1. Regulates cardiac homeostasis and plays a role in the protection against cardiac hypertrophy. Binds chromatin. May act as a transcriptional cofactor for ISL1, repressing its transcriptional activity. May also repress MYOCD transcriptional activity. In Rattus norvegicus (Rat), this protein is Muscular LMNA-interacting protein.